Reading from the N-terminus, the 292-residue chain is Glutamate racemase (292 aa).

Substrate-binding positions include 10–11 (DS) and 42–43 (YG). Catalysis depends on Cys73, which acts as the Proton donor/acceptor. 74 to 75 (NS) provides a ligand contact to substrate. The Proton donor/acceptor role is filled by Cys186. Substrate is bound at residue 187–188 (TH).

Belongs to the aspartate/glutamate racemases family.

It catalyses the reaction L-glutamate = D-glutamate. Its pathway is cell wall biogenesis; peptidoglycan biosynthesis. Provides the (R)-glutamate required for cell wall biosynthesis. The protein is Glutamate racemase of Beutenbergia cavernae (strain ATCC BAA-8 / DSM 12333 / CCUG 43141 / JCM 11478 / NBRC 16432 / NCIMB 13614 / HKI 0122).